The chain runs to 142 residues: Large ribosomal subunit protein uL13 (142 aa).

Belongs to the universal ribosomal protein uL13 family. In terms of assembly, part of the 50S ribosomal subunit.

In terms of biological role, this protein is one of the early assembly proteins of the 50S ribosomal subunit, although it is not seen to bind rRNA by itself. It is important during the early stages of 50S assembly. The sequence is that of Large ribosomal subunit protein uL13 from Coxiella burnetii (strain CbuK_Q154) (Coxiella burnetii (strain Q154)).